The chain runs to 811 residues: Probable potassium transporter 16 (811 aa).

The Cytoplasmic portion of the chain corresponds to Met-1–Arg-66. A helical transmembrane segment spans residues Leu-67 to Tyr-87. Over Gln-88–Asp-100 the chain is Extracellular. Residues Ile-101–Val-121 form a helical membrane-spanning segment. At Phe-122 to Lys-190 the chain is on the cytoplasmic side. Residues Ile-191–Asn-211 traverse the membrane as a helical segment. At Pro-212–Pro-228 the chain is on the extracellular side. The helical transmembrane segment at His-229–Val-249 threads the bilayer. Residues Gln-250 to Lys-256 lie on the Cytoplasmic side of the membrane. The chain crosses the membrane as a helical span at residues Ile-257–Ile-277. Residues Tyr-278–Gln-310 lie on the Extracellular side of the membrane. The chain crosses the membrane as a helical span at residues Leu-311–Phe-331. The Cytoplasmic portion of the chain corresponds to Ser-332–Gln-337. A helical membrane pass occupies residues Leu-338 to Tyr-358. Residues Leu-359 to Pro-379 are Extracellular-facing. A helical transmembrane segment spans residues Leu-380 to Val-400. Topologically, residues Ser-401–Asn-438 are cytoplasmic. The chain crosses the membrane as a helical span at residues Phe-439 to Val-459. The Extracellular portion of the chain corresponds to Lys-460 to Glu-463. The helical transmembrane segment at Ile-464–Val-484 threads the bilayer. Residues Trp-485–Asn-488 lie on the Cytoplasmic side of the membrane. Residues Ile-489 to Ala-509 form a helical membrane-spanning segment. At Val-510–Tyr-519 the chain is on the extracellular side. Residues Met-520–Val-540 form a helical membrane-spanning segment. The Cytoplasmic portion of the chain corresponds to Lys-541 to Ile-811.

This sequence belongs to the HAK/KUP transporter (TC 2.A.72.3) family.

It localises to the membrane. In terms of biological role, high-affinity potassium transporter. The polypeptide is Probable potassium transporter 16 (HAK16) (Oryza sativa subsp. japonica (Rice)).